We begin with the raw amino-acid sequence, 183 residues long: MKKKSSLSEEDQALFRQLMAGTRQIKQDTIVHRPPRKKISEVPVKRLIQEQADASHYFSDEFQPLLNTEGPVKYVRPDVSHFEAKKLRRGDYSPELFLDLHGLTQLQAKQELGALIATCRREHVFCACVMHGHGKHILKQQTPLWLAQHPHVMAFHQAPKEYGGDAALLVLIEVEEWLPPELP.

In terms of domain architecture, Smr spans 98 to 173; the sequence is LDLHGLTQLQ…GDAALLVLIE (76 aa).

This sequence belongs to the SmrB family. Associates with collided ribosomes, but not with correctly translating polysomes.

In terms of biological role, acts as a ribosome collision sensor. Detects stalled/collided disomes (pairs of ribosomes where the leading ribosome is stalled and a second ribosome has collided with it) and endonucleolytically cleaves mRNA at the 5' boundary of the stalled ribosome. Stalled/collided disomes form a new interface (primarily via the 30S subunits) that binds SmrB. Cleaved mRNA becomes available for tmRNA ligation, leading to ribosomal subunit dissociation and rescue of stalled ribosomes. This Escherichia fergusonii (strain ATCC 35469 / DSM 13698 / CCUG 18766 / IAM 14443 / JCM 21226 / LMG 7866 / NBRC 102419 / NCTC 12128 / CDC 0568-73) protein is Ribosome rescue factor SmrB.